Consider the following 230-residue polypeptide: Urease accessory protein UreG (230 aa).

33-40 (GPVGSGKT) provides a ligand contact to GTP.

It belongs to the SIMIBI class G3E GTPase family. UreG subfamily. In terms of assembly, homodimer. UreD, UreF and UreG form a complex that acts as a GTP-hydrolysis-dependent molecular chaperone, activating the urease apoprotein by helping to assemble the nickel containing metallocenter of UreC. The UreE protein probably delivers the nickel.

Its subcellular location is the cytoplasm. Functionally, facilitates the functional incorporation of the urease nickel metallocenter. This process requires GTP hydrolysis, probably effectuated by UreG. The polypeptide is Urease accessory protein UreG (Mycobacteroides abscessus (strain ATCC 19977 / DSM 44196 / CCUG 20993 / CIP 104536 / JCM 13569 / NCTC 13031 / TMC 1543 / L948) (Mycobacterium abscessus)).